Here is a 79-residue protein sequence, read N- to C-terminus: Short neurotoxin 7 (79 aa).

The N-terminal stretch at 1-21 is a signal peptide; the sequence is MKTLLLTLVMVTIMCLDLGYT. Disulfide bonds link Cys-24/Cys-41, Cys-34/Cys-59, Cys-63/Cys-71, and Cys-72/Cys-77.

It belongs to the three-finger toxin family. Short-chain subfamily. Type III alpha-neurotoxin sub-subfamily. As to expression, expressed by the venom gland.

It is found in the secreted. Its function is as follows. Binds with high affinity to muscle nicotinic acetylcholine receptor (nAChR) and hinders acetylcholine binding to the receptor, thereby impairing neuromuscular transmission. Competes with the binding of alpha-bungarotoxin on muscle AChR (from Torpedo) (IC(50)=0.30 uM). In vivo, causes muscle paralysis, spasms and increased respiration. In Pseudonaja textilis (Eastern brown snake), this protein is Short neurotoxin 7.